The following is a 490-amino-acid chain: MEAPDYEVLSVREQLFHERIRECIISTLLFATLYILCHIFLTRFKKPAEFTTVDDEDATVNKIALELCTFTLAIALGAVLLLPFSIISNEVLLSLPRNYYIQWLNGSLIHGLWNLVFLFSNLSLIFLMPFAYFFTESEGFAGSRRGVLGRVYETVVMLMLLTLLVLGMVWVASAILDNNKASRESLYDFWEYYLPYLYSCISFLGVLLLLVCTPLGLARMFSVTGKLLVKPRLLEDLEEQLYCSAFEEAAPTRRICNPTSCWLPLDMELLHRQVLALQTQRVLLEKRRKASAWQRNLGYPLAMLCLLVLTGLSVLIVAIHILELLIDEAAMPRGMQDASLGQVSFSRLGSFGAVIQVALIFYLMVSSVVGFYSSPLFRSLRPRWHDTAMTQIIGNCVCLLVLSSALPVFSRTLGLTRFDLLGDFGRFNWLGNFYIVFLYNAAFAGLTTLCLVKTFTAAVRAELIRAFGLDRLPLPVSGFPPRASRKTQHQ.

Residues Met-1 to Arg-21 are Extracellular-facing. The segment at Met-1–Thr-59 is interaction with LGB. The interval Met-1–Leu-76 is LCN1-binding. The chain crosses the membrane as a helical span at residues Glu-22 to Thr-42. At Arg-43–Glu-66 the chain is on the cytoplasmic side. Residues Leu-67–Ile-87 traverse the membrane as a helical segment. Residues Ser-88 to Asn-114 are Extracellular-facing. A helical membrane pass occupies residues Leu-115 to Thr-135. At Glu-136 to Thr-154 the chain is on the cytoplasmic side. Residues Val-155–Ile-175 traverse the membrane as a helical segment. The Extracellular portion of the chain corresponds to Leu-176–Tyr-196. Residues Leu-197–Leu-217 traverse the membrane as a helical segment. Residues Ala-218–Cys-305 are Cytoplasmic-facing. Residues Leu-306–Ile-326 traverse the membrane as a helical segment. Residues Asp-327–Ser-350 are Extracellular-facing. A helical membrane pass occupies residues Phe-351–Phe-371. Over Tyr-372–Ala-388 the chain is Cytoplasmic. The chain crosses the membrane as a helical span at residues Met-389–Phe-409. At Ser-410–Gly-431 the chain is on the extracellular side. The helical transmembrane segment at Asn-432–Val-452 threads the bilayer. Residues Lys-453–Gln-490 are Cytoplasmic-facing.

It belongs to the LIMR family. As to quaternary structure, dimer. Can also form higher oligomers. Interacts with LCN1; this interaction mediates the endocytosis of LCN1. Interacts with UBAC2, FAF2, VCP, AMFR, ZNRF3, CTNNB1, LRP6, GSK3A, GSK3B, FZD6, DVL2 and RNF43. Interaction with LGB and SCGB1A1 is controversial.

The protein resides in the cell membrane. The protein localises to the endoplasmic reticulum membrane. In terms of biological role, plays an essential role in lymphocyte development by negatively regulating the canonical Wnt signaling pathway. In association with UBAC2 and E3 ubiquitin-protein ligase AMFR, promotes the ubiquitin-mediated degradation of CTNNB1 and Wnt receptors FZD6 and LRP6. LMBR1L stabilizes the beta-catenin destruction complex that is required for regulating CTNNB1 levels. Acts as a LCN1 receptor and can mediate its endocytosis. This is Protein LMBR1L (LMBR1L) from Pongo abelii (Sumatran orangutan).